Reading from the N-terminus, the 277-residue chain is Sulfur carrier protein FdhD (277 aa).

C121 functions as the Cysteine persulfide intermediate in the catalytic mechanism. 260 to 265 serves as a coordination point for Mo-bis(molybdopterin guanine dinucleotide); sequence FCKPGR.

Belongs to the FdhD family.

It is found in the cytoplasm. Required for formate dehydrogenase (FDH) activity. Acts as a sulfur carrier protein that transfers sulfur from IscS to the molybdenum cofactor prior to its insertion into FDH. The polypeptide is Sulfur carrier protein FdhD (Escherichia coli O81 (strain ED1a)).